Consider the following 416-residue polypeptide: Gamma-glutamyl phosphate reductase (416 aa).

It belongs to the gamma-glutamyl phosphate reductase family.

The protein resides in the cytoplasm. The enzyme catalyses L-glutamate 5-semialdehyde + phosphate + NADP(+) = L-glutamyl 5-phosphate + NADPH + H(+). It participates in amino-acid biosynthesis; L-proline biosynthesis; L-glutamate 5-semialdehyde from L-glutamate: step 2/2. Its function is as follows. Catalyzes the NADPH-dependent reduction of L-glutamate 5-phosphate into L-glutamate 5-semialdehyde and phosphate. The product spontaneously undergoes cyclization to form 1-pyrroline-5-carboxylate. This chain is Gamma-glutamyl phosphate reductase, found in Leptospira interrogans serogroup Icterohaemorrhagiae serovar Lai (strain 56601).